We begin with the raw amino-acid sequence, 132 residues long: Transcription antitermination protein NusB (132 aa).

The protein belongs to the NusB family.

Its function is as follows. Involved in transcription antitermination. Required for transcription of ribosomal RNA (rRNA) genes. Binds specifically to the boxA antiterminator sequence of the ribosomal RNA (rrn) operons. This Campylobacter jejuni subsp. doylei (strain ATCC BAA-1458 / RM4099 / 269.97) protein is Transcription antitermination protein NusB.